Here is a 1221-residue protein sequence, read N- to C-terminus: Adhesion G-protein coupled receptor G6 (1221 aa).

The N-terminal stretch at 1 to 37 is a signal peptide; the sequence is MMFRSDRMWSCHWKWKPSPLLFLFALYIMCVPHSVWG. Topologically, residues 38–862 are extracellular; that stretch reads CANCRVVLSN…ASQLDARNTK (825 aa). Cysteine 41 and cysteine 67 are oxidised to a cystine. Residues 41–149 enclose the CUB domain; that stretch reads CRVVLSNPSG…KGFNASYIRV (109 aa). Glutamate 89 and aspartate 97 together coordinate Ca(2+). Cysteine 94 and cysteine 111 are joined by a disulfide. Asparagine 121 carries N-linked (GlcNAc...) asparagine glycosylation. Ca(2+)-binding residues include aspartate 134, serine 136, and isoleucine 137. Asparagine 143, asparagine 206, asparagine 258, asparagine 314, asparagine 324, asparagine 353, asparagine 438, asparagine 445, asparagine 452, asparagine 485, asparagine 488, and asparagine 505 each carry an N-linked (GlcNAc...) asparagine glycan. The Pentraxin (PTX) domain occupies 154–356; sequence RNQKVILPQT…ALKAESNLSC (203 aa). Intrachain disulfides connect cysteine 186–cysteine 254 and cysteine 231–cysteine 277. The tract at residues 473 to 837 is mediates interaction with laminin-2; it reads EPRLVLWALL…SDASETVCLC (365 aa). 2 cysteine pairs are disulfide-bonded: cysteine 525-cysteine 560 and cysteine 548-cysteine 580. N-linked (GlcNAc...) asparagine glycans are attached at residues asparagine 563, asparagine 593, asparagine 600, asparagine 605, asparagine 667, asparagine 673, asparagine 695, asparagine 704, asparagine 750, asparagine 776, asparagine 811, and asparagine 818. The region spanning 670-853 is the GAIN-B domain; it reads SHVNITTRNL…GVLMDLPRSA (184 aa). Disulfide bonds link cysteine 803–cysteine 835 and cysteine 822–cysteine 837. The segment at 803–853 is GPS; the sequence is CAFWDLNKNKSFGGWNTSGCVAHRDSDASETVCLCNHFTHFGVLMDLPRSA. Positions 842 to 850 are stachel; the sequence is HFGVLMDLP. A helical transmembrane segment spans residues 863-883; that stretch reads VLTFISYIGCGISAIFSAATL. Topologically, residues 884 to 903 are cytoplasmic; that stretch reads LTYVAFEKLRRDYPSKILMN. A helical transmembrane segment spans residues 904–924; it reads LSTALLFLNLLFLLDGWITSF. The Extracellular portion of the chain corresponds to 925–929; that stretch reads NVDGL. A helical membrane pass occupies residues 930-950; it reads CIAVAVLLHFFLLATFTWMGL. The Cytoplasmic portion of the chain corresponds to 951–970; it reads EAIHMYIALVKVFNTYIRRY. Residues 971-991 traverse the membrane as a helical segment; sequence ILKFCIIGWGLPALVVSVVLA. Residues 992-1024 are Extracellular-facing; it reads SRNNNEVYGKESYGKEKGDEFCWIQDPVIFYVT. A helical membrane pass occupies residues 1025-1045; sequence CAGYFGVMFFLNIAMFIVVMV. At 1046-1069 the chain is on the cytoplasmic side; the sequence is QICGRNGKRSNRTLREEVLRNLRS. The chain crosses the membrane as a helical span at residues 1070–1090; that stretch reads VVSLTFLLGMTWGFAFFAWGP. At 1091 to 1092 the chain is on the extracellular side; it reads LN. A helical transmembrane segment spans residues 1093–1113; that stretch reads IPFMYLFSIFNSLQGLFIFIF. Residue asparagine 1103 coordinates 17alpha-hydroxyprogesterone. Topologically, residues 1114–1221 are cytoplasmic; it reads HCAMKENVQK…GQVLVKTGPC (108 aa). Positions 1156–1176 are disordered; that stretch reads NLGKSLSSSSIGSNSTYLTSK. A phosphoserine mark is found at serine 1165 and serine 1168.

The protein belongs to the G-protein coupled receptor 2 family. Adhesion G-protein coupled receptor (ADGR) subfamily. Heterodimer of 2 chains generated by proteolytic processing; the large extracellular N-terminal fragment and the membrane-bound C-terminal fragment predominantly remain associated and non-covalently linked. Interacts with Laminin-2; this interaction stabilizes the receptor in an inactive state. Laminin-2 polymerization could facilitate ADGRG6-NTF removal, thereby exposing the tethered agonist to drive myelination. Interacts with PRNP. Interacts with ITGB1. Interacts with LRP1. In terms of processing, proteolytically cleaved into 2 conserved sites: one in the GPS region of the GAIN-B domain (S1 site) and the other in the middle of the extracellular domain (S2 site). The proteolytic cleavage at S1 site generates an extracellular subunit and a seven-transmembrane subunit. Furin is involved in the cleavage of the S2 site generating a soluble fragment. Processing at the GPS region occurred independent of and probably prior to the cleavage at the S2 site. Proteolytic cleavage is required for activation of the receptor. Post-translationally, highly glycosylated. As to expression, expressed in placenta and to a lower extent in pancreas and liver. Detected in aortic endothelial cells but not in skin microvascular endothelial cells.

Its subcellular location is the cell membrane. Its activity is regulated as follows. Forms a heterodimer of 2 chains generated by proteolytic processing that remain associated through non-covalent interactions mediated by the GAIN-B domain. In the inactivated receptor, the Stachel sequence (also named stalk) is embedded in the GAIN-B domain, where it adopts a beta-strand conformation. On activation, the Stachel moves into the 7 transmembrane region and adopts a twisted hook-shaped configuration that forms contacts within the receptor, leading to coupling of a G-alpha protein, which activates signaling. The cleaved GAIN-B and N-terminal domains can then dissociate from the rest of the receptor. In terms of biological role, adhesion G-protein coupled receptor (aGPCR) for steroid hormones, such as progesterone and 17alpha-hydroxyprogesterone (17OHP). Involved in many biological processes, such as myelination, sprouting angiogenesis, placenta, ear and cartilage development. Ligand binding causes a conformation change that triggers signaling via guanine nucleotide-binding proteins (G proteins) and modulates the activity of downstream effectors, such as adenylate cyclase. ADGRG6 is coupled to G(i) G alpha proteins and mediates inhibition of adenylate cyclase. Also able to couple to G(q) G proteins. Involved in myelination of the peripheral nervous system: required for differentiation of promyelinating Schwann cells and for normal myelination of axons. Also acts as a regulator of body length and bone mass. Acts as a regulator of blood-brain barrier formation in the central nervous system vie its association with LRP1 and ITGB1. This Homo sapiens (Human) protein is Adhesion G-protein coupled receptor G6.